The following is a 137-amino-acid chain: uncharacterized protein (137 aa).

This is an uncharacterized protein from Bacillus subtilis (strain 168).